The chain runs to 200 residues: NADH-quinone oxidoreductase subunit C (200 aa).

It belongs to the complex I 30 kDa subunit family. NDH-1 is composed of 14 different subunits. Subunits NuoB, C, D, E, F, and G constitute the peripheral sector of the complex.

It localises to the cell inner membrane. The enzyme catalyses a quinone + NADH + 5 H(+)(in) = a quinol + NAD(+) + 4 H(+)(out). NDH-1 shuttles electrons from NADH, via FMN and iron-sulfur (Fe-S) centers, to quinones in the respiratory chain. The immediate electron acceptor for the enzyme in this species is believed to be ubiquinone. Couples the redox reaction to proton translocation (for every two electrons transferred, four hydrogen ions are translocated across the cytoplasmic membrane), and thus conserves the redox energy in a proton gradient. The sequence is that of NADH-quinone oxidoreductase subunit C from Burkholderia ambifaria (strain MC40-6).